The primary structure comprises 313 residues: Serine/threonine-protein kinase SZE1 (313 aa).

A lipid anchor (N-myristoyl glycine) is attached at G2. The 269-residue stretch at 43 to 311 folds into the Protein kinase domain; the sequence is MELGESLGYI…EVLDNLNAIA (269 aa). ATP-binding positions include 49–57 and K71; that span reads LGYINPKTL.

The protein belongs to the protein kinase superfamily. Ser/Thr protein kinase family. In terms of assembly, component of an immune signaling complex made of, at least, SZE1, BKN2/SZE2, ZAR1 and ZED1. Interacts directly with ZED1, ZAR1 and Pseudomonas syringae HOPZ1A at the plasma membrane. Post-translationally, N-terminal myristoylation is critical for plasma membrane localization and implication in defense responses. Autophosphorylated. As to expression, expressed in roots, seedlings, rosette leaves, floral organs, siliques and inflorescence stems.

It is found in the cell membrane. The catalysed reaction is L-seryl-[protein] + ATP = O-phospho-L-seryl-[protein] + ADP + H(+). It carries out the reaction L-threonyl-[protein] + ATP = O-phospho-L-threonyl-[protein] + ADP + H(+). Functionally, together with BKN2/SZE2 and ZED1, required for effector-triggered immunity (e.g. Pseudomonas syringae effector type III HopZ1a) via the activation of ZAR1, thus being essential for resistance against P.syringae pv. tomato DC3000 expressing HopZ1a. The polypeptide is Serine/threonine-protein kinase SZE1 (Arabidopsis thaliana (Mouse-ear cress)).